We begin with the raw amino-acid sequence, 459 residues long: Argininosuccinate lyase (459 aa).

It belongs to the lyase 1 family. Argininosuccinate lyase subfamily.

Its subcellular location is the cytoplasm. It carries out the reaction 2-(N(omega)-L-arginino)succinate = fumarate + L-arginine. It functions in the pathway amino-acid biosynthesis; L-arginine biosynthesis; L-arginine from L-ornithine and carbamoyl phosphate: step 3/3. The protein is Argininosuccinate lyase of Geobacillus sp. (strain WCH70).